The following is a 62-amino-acid chain: MNNNEPDTLPDPAIGYIFQNDIVALKQAFSLPDIDYADISQREQLAAALKRWPLLAEFAQQK.

The sequence is that of Protein YhjR (yhjR) from Escherichia coli (strain K12).